The sequence spans 192 residues: Fe/S biogenesis protein NfuA (192 aa).

Residues Cys149 and Cys152 each contribute to the [4Fe-4S] cluster site.

It belongs to the NfuA family. Homodimer. Requires [4Fe-4S] cluster as cofactor.

Its function is as follows. Involved in iron-sulfur cluster biogenesis. Binds a 4Fe-4S cluster, can transfer this cluster to apoproteins, and thereby intervenes in the maturation of Fe/S proteins. Could also act as a scaffold/chaperone for damaged Fe/S proteins. The protein is Fe/S biogenesis protein NfuA of Shewanella piezotolerans (strain WP3 / JCM 13877).